A 449-amino-acid chain; its full sequence is Phosphoglucosamine mutase (449 aa).

Serine 101 (phosphoserine intermediate) is an active-site residue. Mg(2+) contacts are provided by serine 101, aspartate 241, aspartate 243, and aspartate 245. Phosphoserine is present on serine 101.

The protein belongs to the phosphohexose mutase family. It depends on Mg(2+) as a cofactor. In terms of processing, activated by phosphorylation.

The enzyme catalyses alpha-D-glucosamine 1-phosphate = D-glucosamine 6-phosphate. Its function is as follows. Catalyzes the conversion of glucosamine-6-phosphate to glucosamine-1-phosphate. The polypeptide is Phosphoglucosamine mutase (Alkaliphilus oremlandii (strain OhILAs) (Clostridium oremlandii (strain OhILAs))).